A 526-amino-acid chain; its full sequence is Delayed-rectifier potassium channel regulatory subunit KCNS1 (526 aa).

Topologically, residues 1-217 (MLMLLVRGTH…LTMENPGYSL (217 aa)) are cytoplasmic. A helical membrane pass occupies residues 218–239 (PSKLFSCVSISVVLASIAAMCI). Topologically, residues 240–270 (HSLPEYQAREAAAAVAAVAAGRSPEGVRDDP) are extracellular. The chain crosses the membrane as a helical span at residues 271–293 (VLRRLEYFCIAWFSFEVSSRLLL). Topologically, residues 294–304 (APSTRNFFCHP) are cytoplasmic. A helical membrane pass occupies residues 305–322 (LNLIDIVSVLPFYLTLLA). The Extracellular segment spans residues 323-337 (GVALGDQGGKEFGHL). The chain crosses the membrane as a helical; Voltage-sensor span at residues 338–358 (GKVVQVFRLMRIFRVLKLARH). The Cytoplasmic portion of the chain corresponds to 359–373 (STGLRSLGATLKHSY). The helical transmembrane segment at 374 to 395 (REVGILLLYLAVGVSVFSGVAY) threads the bilayer. Residues 396–408 (TAEKEEDVGFNTI) lie on the Extracellular side of the membrane. The segment at residues 409-420 (PACWWWGTVSMT) is an intramembrane region (helical). Residues 421–426 (TVGYGD) carry the Selectivity filter motif. The stretch at 421-428 (TVGYGDVV) is an intramembrane region. Residues 429–435 (PVTVAGK) are Extracellular-facing. Residues 436 to 464 (LAASGCILGGILVVALPITIIFNKFSHFY) traverse the membrane as a helical segment. The Cytoplasmic segment spans residues 465–526 (RRQKALEAAV…PSEPPHPQRY (62 aa)). Positions 492–526 (VSEASLETSGETSQEGRSADLESQAPSEPPHPQRY) are disordered. Residues 496–507 (SLETSGETSQEG) are compositionally biased toward polar residues.

This sequence belongs to the potassium channel family. S (TC 1.A.1.2) subfamily. Kv9.1/KCNS1 sub-subfamily. In terms of assembly, heterotetramer with KCNB1. Heterotetramer with KCNB2. Does not form homomultimers.

Its subcellular location is the cell membrane. Functionally, potassium channel regulatory subunit that modulate the delayed rectifier voltage-gated potassium channel activity of KCNB1 and KCNB2 by altering their kinetics, expression levels, and shifting the half-inactivation potential to more polarized values. While it does not form functional channels on its own, it can form functional heterotetrameric channels with KCNB1 and KCNB2. Each regulatory subunit has unique regulatory properties that can lead to extensive inhibition, significant changes in kinetics, and/or substantial shifts in the voltage dependencies of the inactivation process. The chain is Delayed-rectifier potassium channel regulatory subunit KCNS1 from Gorilla gorilla gorilla (Western lowland gorilla).